Consider the following 316-residue polypeptide: PHD finger protein 20-like protein 1 (316 aa).

In terms of domain architecture, Tudor 1 spans 11–71; sequence ITFEIGARLE…SNRLRPLERP (61 aa). Residues Lys75 and Lys79 each participate in a glycyl lysine isopeptide (Lys-Gly) (interchain with G-Cter in SUMO2) cross-link. One can recognise a Tudor 2 domain in the interval 85 to 141; the sequence is FDFKAGEEVLARWTDCRYYPAKIEAINKEGTFTVQFYDGVIRCLKRMHIKAMPEDAK. Residues 183 to 237 form a disordered region; the sequence is AKNKTGNKPRTSANSNKDKEKDERKWFKVPSKKEETSTSITTPEVEKKEDLPTSS. Polar residues predominate over residues 186–197; it reads KTGNKPRTSANS. Positions 198–218 are enriched in basic and acidic residues; the sequence is NKDKEKDERKWFKVPSKKEET.

As to quaternary structure, interacts with methylated DNMT1 (DNMT1K142me1). Interacts with SOX2.

It localises to the nucleus. In terms of biological role, is a negative regulator of proteasomal degradation of a set of methylated proteins, including DNMT1 and SOX2. Involved in the maintainance of embryonic stem cells pluripotency, through the regulation of SOX2 levels. This chain is PHD finger protein 20-like protein 1 (PHF20L1), found in Bos taurus (Bovine).